Consider the following 97-residue polypeptide: Ataxin-7-like protein 3B (97 aa).

The disordered stretch occupies residues 76–97; that stretch reads SLPGDPGDGPQTELQRSPPEFQ. Phosphoserine is present on serine 92.

This sequence belongs to the SGF11 family. As to quaternary structure, interacts strongly with ENY2. Interacts weakly with USP22.

Its subcellular location is the cytoplasm. By binding to ENY2, interferes with the nuclear functions of the deubiquitinase (DUB) module of the SAGA complex which consists of ENY2, ATXN7, ATXN7L3 and the histone deubiquitinating component USP22. Affects USP22 DUB activity toward histones indirectly by changing the subcellular distribution of ENY2 and altering ENY2 availability for ATXN7L3 interaction. Regulates H2B monoubiquitination (H2Bub1) levels through cytoplasmic sequestration of ENY2 resulting in loss of nuclear ENY2-ATXN7L3 association which destabilizes ATXN7L3. Affects protein expression levels of ENY2 and ATXN7L3. This chain is Ataxin-7-like protein 3B (Atxn7l3b), found in Mus musculus (Mouse).